Consider the following 362-residue polypeptide: Peptide chain release factor 1 (362 aa).

Q237 carries the N5-methylglutamine modification. Over residues 285-295 (EEKRHAEEAST) the composition is skewed to basic and acidic residues. Positions 285–311 (EEKRHAEEASTRRNLLGSGDRSDRIRT) are disordered.

The protein belongs to the prokaryotic/mitochondrial release factor family. Post-translationally, methylated by PrmC. Methylation increases the termination efficiency of RF1.

The protein resides in the cytoplasm. In terms of biological role, peptide chain release factor 1 directs the termination of translation in response to the peptide chain termination codons UAG and UAA. The polypeptide is Peptide chain release factor 1 (Photobacterium profundum (strain SS9)).